We begin with the raw amino-acid sequence, 84 residues long: Small ribosomal subunit protein bS16 (84 aa).

This sequence belongs to the bacterial ribosomal protein bS16 family.

This chain is Small ribosomal subunit protein bS16, found in Deinococcus radiodurans (strain ATCC 13939 / DSM 20539 / JCM 16871 / CCUG 27074 / LMG 4051 / NBRC 15346 / NCIMB 9279 / VKM B-1422 / R1).